Consider the following 199-residue polypeptide: MSLKDRFDKFIDYFTEDGDETEVQEQTVSRPAAPVKQKPELVQPKPVRESKPAPRPAAAAKPQPKPQPKPQPQQKSSTENITRLHARQQELAQHRANADEKITIDVRYPRRYEEATEIVDLLLANESILIDFQYMTEVQARRCLDYLDGARYVLAGNLKKVASTMYLLTPINVVVNVEDIRLPNDVEISEFDFDMKRSR.

The segment at 15–79 (TEDGDETEVQ…PQPQQKSSTE (65 aa)) is disordered.

It belongs to the SepF family. Homodimer. Interacts with FtsZ.

It localises to the cytoplasm. Cell division protein that is part of the divisome complex and is recruited early to the Z-ring. Probably stimulates Z-ring formation, perhaps through the cross-linking of FtsZ protofilaments. Its function overlaps with FtsA. This is Cell division protein SepF from Streptococcus sanguinis (strain SK36).